Here is a 641-residue protein sequence, read N- to C-terminus: E3 ubiquitin-protein ligase TRIM47 (641 aa).

The RING-type zinc-finger motif lies at 9 to 58 (CPICLEPLREPVTLPCGHNFCLACLGALWPHRSAGGTGGSGGPARCPLCQ). Position 72 is a phosphothreonine (Thr-72). A disordered region spans residues 81–123 (QGSVPGPMSAPASGSTRGATPEPSAPSAPPPAPEPSAPCAPEQ). Over residues 103-118 (PSAPSAPPPAPEPSAP) the composition is skewed to pro residues. A B box-type zinc finger spans residues 181–221 (LEESLCPRHLRPLERYCRVERVCLCEACATQDHRGHELVPL). Residues Cys-186, His-189, Cys-208, and His-213 each contribute to the Zn(2+) site. Residues 305–325 (QGDLRRQEEQRSRLSKARHNL) adopt a coiled-coil conformation. Ser-393 bears the Phosphoserine mark. The interval 396–416 (DGLQKLGSEDVESQDPDSTSL) is disordered. The 222-residue stretch at 413 to 634 (STSLLESEAP…LQIGPLKKSC (222 aa)) folds into the B30.2/SPRY domain. Ser-464 bears the Phosphoserine mark. Arg-585 carries the post-translational modification Omega-N-methylarginine. Ser-591 carries the post-translational modification Phosphoserine.

Belongs to the TRIM/RBCC family. Expressed in hepatocytes, expression is increased in fatty livers.

The protein localises to the cytoplasm. Its subcellular location is the nucleus. It carries out the reaction S-ubiquitinyl-[E2 ubiquitin-conjugating enzyme]-L-cysteine + [acceptor protein]-L-lysine = [E2 ubiquitin-conjugating enzyme]-L-cysteine + N(6)-ubiquitinyl-[acceptor protein]-L-lysine.. It functions in the pathway protein modification; protein ubiquitination. E3 ubiquitin-protein ligase that mediates the ubiquitination and proteasomal degradation of CYLD. The chain is E3 ubiquitin-protein ligase TRIM47 from Mus musculus (Mouse).